Reading from the N-terminus, the 205-residue chain is Suppressor of IKBKE 1 (205 aa).

Coiled-coil stretches lie at residues 4–32 and 154–192; these read TIDK…LIDQ and KAIQ…ESLR.

It belongs to the SIKE family. In terms of assembly, interacts with IKBKE and TBK1 via its coiled coil region. Interaction with TBK1 is disrupted upon viral infection or TLR3 stimulation. Interacts with CDC42BPB. Associates with the STRIPAK core complex composed of PP2A catalytic and scaffolding subunits, the striatins (PP2A regulatory subunits), the striatin-associated proteins MOB4, STRIP1 and STRIP2, PDCD10 and members of the STE20 kinases, such as STK24 and STK26.

Its subcellular location is the cytoplasm. In terms of biological role, suppressor of IKK-epsilon. Associates with the striatin-interacting phosphatase and kinase (STRIPAK) core complex, forming the extended (SIKE1:SLMAP)STRIPAK complex. The (SIKE1:SLMAP)STRIPAK complex dephosphorylates STK3 leading to the inhibition of Hippo signaling and the control of cell growth. The sequence is that of Suppressor of IKBKE 1 (sike1) from Xenopus laevis (African clawed frog).